A 544-amino-acid chain; its full sequence is Zinc finger and BTB domain-containing protein 7B (544 aa).

The 82-residue stretch at 34 to 115 (CDLTIRTQGL…AYTATLTTSS (82 aa)) folds into the BTB domain. A Phosphoserine modification is found at serine 150. Disordered regions lie at residues 171–221 (TTAS…ARAN) and 244–314 (GRLG…EDPI). The segment covering 186 to 200 (PQVPLLPPPPPPPRP) has biased composition (pro residues). Basic residues predominate over residues 201-210 (VARRSRKPRK). Residues lysine 210 and lysine 216 each carry the N6-acetyllysine; by EP300; alternate modification. Glycyl lysine isopeptide (Lys-Gly) (interchain with G-Cter in ubiquitin); alternate cross-links involve residues lysine 210 and lysine 216. Residues 277 to 286 (FEGEEEEEEM) show a composition bias toward acidic residues. Residue lysine 339 is modified to N6-acetyllysine; by EP300; alternate. Lysine 339 participates in a covalent cross-link: Glycyl lysine isopeptide (Lys-Gly) (interchain with G-Cter in ubiquitin); alternate. Positions 348 to 404 (MPQECPVCHKIIHGAGKLPRHMRTHTGEKPFACEVCGVRFTRNDKLKIHMRKHTGER) are required for interaction with and acetylation by EP300. Residues 350 to 372 (QECPVCHKIIHGAGKLPRHMRTH) form a C2H2-type 1 zinc finger. Residue threonine 373 is modified to Phosphothreonine. 2 C2H2-type zinc fingers span residues 378-400 (FACE…MRKH) and 406-428 (YSCP…MHLH). A C2H2-type 4; atypical zinc finger spans residues 434–458 (YECHLCHKAFAKEDHLQRHLKGQNC). Disordered stretches follow at residues 465-493 (RRRK…DLSN) and 507-544 (WEQS…MESS). Low complexity-rich tracts occupy residues 511–522 (ATTGPPVTTQGP) and 531–544 (TPTT…MESS).

Homodimerizes. Interacts with NCL, NEDD4 and YBX1. Interacts with HNRNPU (via RNA-binding RGG-box region); the interaction facilitates the recruitment of long non-coding RNA Blnc1 by ZBTB7B. Interacts with HDAC4 and HDAC5; the interaction allows the recruitment of HDAC4 and HDAC5 on CD8 loci for deacetylation and possible inhibition of CD8 genes expression. Acetylated directly and specifically by EP300. EP300-mediated acetylation of Lys-210, Lys-216 and Lys-339 stabilizes the protein by antagonizing ubiquitin conjugation. Post-translationally, ubiquitinated, leading to proteasomal degradation. Competes with acetylation on Lys-210, Lys-216 and Lys-339. Widely expressed, with a higher level in skin. Expressed in thymus. Restricted to CD4 cells (mature single positive CD4(+) and intermediate CD4(+)CD8(+) cells). Expressed in the luminal epithelial cells in the mammary glands where is up-regulated at late pregnancy and lactation. Expression is enriched in brown fat.

It localises to the nucleus. In terms of biological role, transcription regulator that acts as a key regulator of lineage commitment of immature T-cell precursors. Exerts distinct biological functions in the mammary epithelial cells and T cells in a tissue-specific manner. Necessary and sufficient for commitment of CD4 lineage, while its absence causes CD8 commitment. Development of immature T-cell precursors (thymocytes) to either the CD4 helper or CD8 killer T-cell lineages correlates precisely with their T-cell receptor specificity for major histocompatibility complex class II or class I molecules, respectively. Cross-antagonism between ZBTB7B and CBF complexes are determinative to CD4 versus CD8 cell fate decision. Suppresses RUNX3 expression and imposes CD4+ lineage fate by inducing the SOCS suppressors of cytokine signaling. induces, as a transcriptional activator, SOCS genes expression which represses RUNX3 expression and promotes the CD4+ lineage fate. During CD4 lineage commitment, associates with multiple sites at the CD8 locus, acting as a negative regulator of the CD8 promoter and enhancers by epigenetic silencing through the recruitment of class II histone deacetylases, such as HDAC4 and HDAC5, to these loci. Regulates the development of IL17-producing CD1d-restricted naural killer (NK) T cells. Also functions as an important metabolic regulator in the lactating mammary glands. Critical feed-forward regulator of insulin signaling in mammary gland lactation, directly regulates expression of insulin receptor substrate-1 (IRS-1) and insulin-induced Akt-mTOR-SREBP signaling. Transcriptional repressor of the collagen COL1A1 and COL1A2 genes. May also function as a repressor of fibronectin and possibly other extracellular matrix genes. Potent driver of brown fat development, thermogenesis and cold-induced beige fat formation. Recruits the brown fat lncRNA 1 (Blnc1):HNRNPU ribonucleoprotein complex to activate thermogenic gene expression in brown and beige adipocytes. This chain is Zinc finger and BTB domain-containing protein 7B, found in Mus musculus (Mouse).